We begin with the raw amino-acid sequence, 370 residues long: tRNA-specific 2-thiouridylase MnmA (370 aa).

ATP contacts are provided by residues 11 to 18 (AMSGGVDS) and methionine 37. Positions 99-101 (NPD) are interaction with target base in tRNA. Cysteine 104 functions as the Nucleophile in the catalytic mechanism. A disulfide bridge connects residues cysteine 104 and cysteine 201. Glycine 129 is a binding site for ATP. Residues 151-153 (KDQ) are interaction with tRNA. The Cysteine persulfide intermediate role is filled by cysteine 201. Residues 313 to 314 (RY) are interaction with tRNA.

The protein belongs to the MnmA/TRMU family. In terms of assembly, interacts with TusE.

The protein resides in the cytoplasm. It catalyses the reaction S-sulfanyl-L-cysteinyl-[protein] + uridine(34) in tRNA + AH2 + ATP = 2-thiouridine(34) in tRNA + L-cysteinyl-[protein] + A + AMP + diphosphate + H(+). Functionally, catalyzes the 2-thiolation of uridine at the wobble position (U34) of tRNA(Lys), tRNA(Glu) and tRNA(Gln), leading to the formation of s(2)U34, the first step of tRNA-mnm(5)s(2)U34 synthesis. Sulfur is provided by IscS, via a sulfur-relay system. Binds ATP and its substrate tRNAs. This Buchnera aphidicola subsp. Baizongia pistaciae (strain Bp) protein is tRNA-specific 2-thiouridylase MnmA.